Here is a 210-residue protein sequence, read N- to C-terminus: 2-dehydro-3-deoxy-phosphogluconate aldolase (210 aa).

The active-site Proton acceptor is the Glu41. The pyruvate site is built by Arg45, Thr69, and Lys129. Lys129 acts as the Schiff-base intermediate with substrate in catalysis.

It belongs to the KHG/KDPG aldolase family. As to quaternary structure, homotrimer.

Its subcellular location is the cytoplasm. It carries out the reaction 2-dehydro-3-deoxy-6-phospho-D-gluconate = D-glyceraldehyde 3-phosphate + pyruvate. It participates in carbohydrate acid metabolism; 2-dehydro-3-deoxy-D-gluconate degradation; D-glyceraldehyde 3-phosphate and pyruvate from 2-dehydro-3-deoxy-D-gluconate: step 2/2. In terms of biological role, catalyzes the reversible, stereospecific retro-aldol cleavage of 2-keto-3-deoxy-6-phosphogluconate (KDPG) to pyruvate and D-glyceraldehyde-3-phosphate. This is 2-dehydro-3-deoxy-phosphogluconate aldolase (eda) from Treponema pallidum (strain Nichols).